Here is a 144-residue protein sequence, read N- to C-terminus: Cytochrome c oxidase subunit 4 isoform 1, mitochondrial (144 aa).

At 1 to 73 the chain is on the mitochondrial matrix side; it reads SVVKSEDFSL…SFAEMNRGSN (73 aa). Position 4 is an N6-acetyllysine; alternate (lysine 4). Lysine 4 is subject to N6-succinyllysine; alternate. Lysine 28 is modified (N6-acetyllysine). Serine 31 and serine 33 each carry phosphoserine. Lysine 35 carries the N6-acetyllysine; alternate modification. Lysine 35 carries the N6-succinyllysine; alternate modification. Residue lysine 42 is modified to N6-acetyllysine. A helical membrane pass occupies residues 74–99; that stretch reads EWKTVVGGAMFFIGFTALVIMWQKHY. Residues 100-144 lie on the Mitochondrial intermembrane side of the membrane; the sequence is VYGPLPQSFDKEWVAKQTKRMLDMKVNPIQGLASKWDYEKNEWKK.

Belongs to the cytochrome c oxidase IV family. As to quaternary structure, component of the cytochrome c oxidase (complex IV, CIV), a multisubunit enzyme composed of 14 subunits. The complex is composed of a catalytic core of 3 subunits MT-CO1, MT-CO2 and MT-CO3, encoded in the mitochondrial DNA, and 11 supernumerary subunits COX4I, COX5A, COX5B, COX6A, COX6B, COX6C, COX7A, COX7B, COX7C, COX8 and NDUFA4, which are encoded in the nuclear genome. The complex exists as a monomer or a dimer and forms supercomplexes (SCs) in the inner mitochondrial membrane with NADH-ubiquinone oxidoreductase (complex I, CI) and ubiquinol-cytochrome c oxidoreductase (cytochrome b-c1 complex, complex III, CIII), resulting in different assemblies (supercomplex SCI(1)III(2)IV(1) and megacomplex MCI(2)III(2)IV(2)). Interacts with PHB2; the interaction decreases in absence of SPHK2. Interacts with AFG1L. Interacts with ABCB7; this interaction allows the regulation of cellular iron homeostasis and cellular reactive oxygen species (ROS) levels in cardiomyocytes. Interacts with FLVCR2; this interaction occurs in the absence of heme and is disrupted upon heme binding. Interacts with IRGC.

Its subcellular location is the mitochondrion inner membrane. The protein operates within energy metabolism; oxidative phosphorylation. Functionally, component of the cytochrome c oxidase, the last enzyme in the mitochondrial electron transport chain which drives oxidative phosphorylation. The respiratory chain contains 3 multisubunit complexes succinate dehydrogenase (complex II, CII), ubiquinol-cytochrome c oxidoreductase (cytochrome b-c1 complex, complex III, CIII) and cytochrome c oxidase (complex IV, CIV), that cooperate to transfer electrons derived from NADH and succinate to molecular oxygen, creating an electrochemical gradient over the inner membrane that drives transmembrane transport and the ATP synthase. Cytochrome c oxidase is the component of the respiratory chain that catalyzes the reduction of oxygen to water. Electrons originating from reduced cytochrome c in the intermembrane space (IMS) are transferred via the dinuclear copper A center (CU(A)) of subunit 2 and heme A of subunit 1 to the active site in subunit 1, a binuclear center (BNC) formed by heme A3 and copper B (CU(B)). The BNC reduces molecular oxygen to 2 water molecules using 4 electrons from cytochrome c in the IMS and 4 protons from the mitochondrial matrix. This chain is Cytochrome c oxidase subunit 4 isoform 1, mitochondrial (COX4I1), found in Pan troglodytes (Chimpanzee).